The sequence spans 82 residues: Small ribosomal subunit protein bS16 (82 aa).

It belongs to the bacterial ribosomal protein bS16 family.

The protein is Small ribosomal subunit protein bS16 of Francisella tularensis subsp. holarctica (strain FTNF002-00 / FTA).